A 377-amino-acid polypeptide reads, in one-letter code: DNA-directed RNA polymerase subunit alpha (377 aa).

The alpha N-terminal domain (alpha-NTD) stretch occupies residues 1-259 (MSDSSHNLLY…KHFSVFEKMD (259 aa)). Positions 276–377 (KDDILHKLVL…KIRSSKNTKG (102 aa)) are alpha C-terminal domain (alpha-CTD).

The protein belongs to the RNA polymerase alpha chain family. As to quaternary structure, homodimer. The RNAP catalytic core consists of 2 alpha, 1 beta, 1 beta' and 1 omega subunit. When a sigma factor is associated with the core the holoenzyme is formed, which can initiate transcription.

It catalyses the reaction RNA(n) + a ribonucleoside 5'-triphosphate = RNA(n+1) + diphosphate. Functionally, DNA-dependent RNA polymerase catalyzes the transcription of DNA into RNA using the four ribonucleoside triphosphates as substrates. This Chlamydia trachomatis serovar D (strain ATCC VR-885 / DSM 19411 / UW-3/Cx) protein is DNA-directed RNA polymerase subunit alpha.